The sequence spans 219 residues: Large ribosomal subunit protein uL16 (219 aa).

The protein belongs to the universal ribosomal protein uL16 family. In terms of assembly, component of the small ribosomal subunit. Mature ribosomes consist of a small (40S) and a large (60S) subunit. The 40S subunit contains about 33 different proteins and 1 molecule of RNA (18S). The 60S subunit contains about 49 different proteins and 3 molecules of RNA (25S, 5.8S and 5S).

The sequence is that of Large ribosomal subunit protein uL16 (RPL10) from Encephalitozoon cuniculi (strain GB-M1) (Microsporidian parasite).